The sequence spans 257 residues: DNA repair protein RecO (257 aa).

It belongs to the RecO family.

Functionally, involved in DNA repair and RecF pathway recombination. The chain is DNA repair protein RecO from Streptococcus sanguinis (strain SK36).